The chain runs to 541 residues: ATP synthase subunit alpha (541 aa).

Residue Gly-173–Thr-180 coordinates ATP. The segment covering Gly-517 to Ser-527 has biased composition (basic and acidic residues). Positions Gly-517–Lys-541 are disordered. A compositionally biased stretch (polar residues) spans Ala-532–Lys-541.

This sequence belongs to the ATPase alpha/beta chains family. As to quaternary structure, F-type ATPases have 2 components, CF(1) - the catalytic core - and CF(0) - the membrane proton channel. CF(1) has five subunits: alpha(3), beta(3), gamma(1), delta(1), epsilon(1). CF(0) has three main subunits: a(1), b(2) and c(9-12). The alpha and beta chains form an alternating ring which encloses part of the gamma chain. CF(1) is attached to CF(0) by a central stalk formed by the gamma and epsilon chains, while a peripheral stalk is formed by the delta and b chains.

It is found in the cell membrane. The catalysed reaction is ATP + H2O + 4 H(+)(in) = ADP + phosphate + 5 H(+)(out). Functionally, produces ATP from ADP in the presence of a proton gradient across the membrane. The alpha chain is a regulatory subunit. In Kocuria rhizophila (strain ATCC 9341 / DSM 348 / NBRC 103217 / DC2201), this protein is ATP synthase subunit alpha.